A 452-amino-acid chain; its full sequence is tRNA modification GTPase MnmE (452 aa).

The (6S)-5-formyl-5,6,7,8-tetrahydrofolate site is built by R21, E78, and K118. Residues 214-375 (GMKVVIAGRP…LREHLKQAMG (162 aa)) form the TrmE-type G domain. N224 is a K(+) binding site. Residues 224–229 (NAGKSS), 243–249 (TDIAGTT), and 268–271 (DTAG) each bind GTP. Position 228 (S228) interacts with Mg(2+). The K(+) site is built by T243, I245, and T248. Position 249 (T249) interacts with Mg(2+). K452 contributes to the (6S)-5-formyl-5,6,7,8-tetrahydrofolate binding site.

It belongs to the TRAFAC class TrmE-Era-EngA-EngB-Septin-like GTPase superfamily. TrmE GTPase family. In terms of assembly, homodimer. Heterotetramer of two MnmE and two MnmG subunits. Requires K(+) as cofactor.

Its subcellular location is the cytoplasm. Its function is as follows. Exhibits a very high intrinsic GTPase hydrolysis rate. Involved in the addition of a carboxymethylaminomethyl (cmnm) group at the wobble position (U34) of certain tRNAs, forming tRNA-cmnm(5)s(2)U34. In Haemophilus influenzae (strain PittEE), this protein is tRNA modification GTPase MnmE.